A 499-amino-acid chain; its full sequence is Neuropeptide CCHamide-1 receptor (499 aa).

Residues 1-85 (MIANLVSMET…GRRPETYIVP (85 aa)) are Extracellular-facing. Asn-33 and Asn-61 each carry an N-linked (GlcNAc...) asparagine glycan. A helical membrane pass occupies residues 86-106 (ILFALIFVVGVLGNGTLIVVF). The Cytoplasmic portion of the chain corresponds to 107–117 (LSVRQMRNVPN). Residues 118–138 (TYILSLALADLLVIITTVPLA) form a helical membrane-spanning segment. Over 139–162 (STVYTVEYWPYGSFLCSLSEFMKD) the chain is Extracellular. An intrachain disulfide couples Cys-154 to Cys-240. The chain crosses the membrane as a helical span at residues 163-183 (VSIGVSVFTLTALSGDRYFAI). Topologically, residues 184–203 (VDPLRKFHAHGGGRRATRMT) are cytoplasmic. The helical transmembrane segment at 204 to 224 (LATAVSIWLLAILCGLPALIG) threads the bilayer. Residues 225-259 (SNLKHLGINEKSIVICYPYPEEWGINYAKSMVLLH) are Extracellular-facing. Residues 260–280 (FLVYYAIPLVVIAVFYVLIAL) traverse the membrane as a helical segment. Over 281 to 309 (HLMYSASVPGEIQGAVRQVRARRKVAVTV) the chain is Cytoplasmic. A helical transmembrane segment spans residues 310 to 330 (LAFVVIFGICFLPYHVFFLWF). Residues 331 to 348 (YFWPTAQDDYNAFWHVLR) are Extracellular-facing. The chain crosses the membrane as a helical span at residues 349 to 369 (IVAYCMSFANSCANPVALYFV). Residues 370 to 499 (SGAFRKHFNR…PAKFQESLLN (130 aa)) lie on the Cytoplasmic side of the membrane.

The protein belongs to the G-protein coupled receptor 1 family. In terms of tissue distribution, low levels in larval brain and gut with higher levels in adult brain and gut. In the brain expression is widely distributed, including strong expression in the mushroom bodies. Expressed weakly in s-LNv (small ventral lateral neurons) and strongly in l-LNv (large ventral lateral neurons), but not in other clock neurons.

The protein resides in the cell membrane. Receptor for the neuropeptide CCHamide-1. Plays a role in the modulation of starvation-induced olfactory behavior where starved flies show increased responsiveness to food odorants, repellants and pheromones. Contributes to regulation of sleep latency (the time required to fall asleep), amount of sleep and depth of sleep (arousability). Involved in modulation of PDP1 and PDF levels in s-LNv (small ventral lateral neurons) clock neurons in response to CCHa1 released by DN1a (anterior dorsal neurons 1) clock neurons, to regulate morning activity. In a subset of dopaminergic cells in the protocerebral anterior medial (PAM) cluster involved in suppressing arousability in response to CCHa1 secreted by gut enteroendocrine cells. This chain is Neuropeptide CCHamide-1 receptor, found in Drosophila melanogaster (Fruit fly).